The primary structure comprises 162 residues: Beta-lactoglobulin-1 (162 aa).

2 disulfide bridges follow: Cys66–Cys160 and Cys106–Cys119.

Belongs to the calycin superfamily. Lipocalin family. In terms of assembly, monomer. Synthesized in mammary gland and secreted in milk.

The protein localises to the secreted. Primary component of whey, it binds retinol and is probably involved in the transport of that molecule. In Equus asinus (Donkey), this protein is Beta-lactoglobulin-1 (LGB1).